Reading from the N-terminus, the 578-residue chain is 2-succinyl-5-enolpyruvyl-6-hydroxy-3-cyclohexene-1-carboxylate synthase (578 aa).

It belongs to the TPP enzyme family. MenD subfamily. As to quaternary structure, homodimer. Mg(2+) serves as cofactor. Mn(2+) is required as a cofactor. It depends on thiamine diphosphate as a cofactor.

It carries out the reaction isochorismate + 2-oxoglutarate + H(+) = 5-enolpyruvoyl-6-hydroxy-2-succinyl-cyclohex-3-ene-1-carboxylate + CO2. The protein operates within quinol/quinone metabolism; 1,4-dihydroxy-2-naphthoate biosynthesis; 1,4-dihydroxy-2-naphthoate from chorismate: step 2/7. It functions in the pathway quinol/quinone metabolism; menaquinone biosynthesis. Its function is as follows. Catalyzes the thiamine diphosphate-dependent decarboxylation of 2-oxoglutarate and the subsequent addition of the resulting succinic semialdehyde-thiamine pyrophosphate anion to isochorismate to yield 2-succinyl-5-enolpyruvyl-6-hydroxy-3-cyclohexene-1-carboxylate (SEPHCHC). This Prosthecochloris aestuarii (strain DSM 271 / SK 413) protein is 2-succinyl-5-enolpyruvyl-6-hydroxy-3-cyclohexene-1-carboxylate synthase.